A 382-amino-acid chain; its full sequence is MTAPLKHSDPVNVDVALGDRAYDIVIGRGVLASLGERVAALRPGVRTAVVTDRTVAKHWLEPTEASLAAAGIPTSRIVVEEGEISKTYAGLEKVSEALIAAKIERNDLVIALGGGVVGDLAGFAAAILRRGVDFVQVPTSLLAQVDSSVGGKTGINSPQGKNLLGAFHQPVLVIADTAVLDTLSPRQFHAGYAEVAKYGVLGDEAFFTWLEKNHSDIFKGGSAREHAIATSCRAKAGIVSRDERETGERALLNLGHTFGHALEAATGFSDRLFHGEGVAIGMTLAAQFSAKLGMIGEADAARVERHLIEAGLPTRLQDIAGFSQEGLADADALMALMAQDKKVKRGKLTFILLEAVGRAVIAKDVEPAPVRDFLKEKLAQKA.

NAD(+)-binding positions include 81 to 86, 115 to 119, 139 to 140, K152, and K161; these read EGEISK, GVVGD, and TS. Zn(2+)-binding residues include E194, H256, and H274.

It belongs to the sugar phosphate cyclases superfamily. Dehydroquinate synthase family. NAD(+) serves as cofactor. Co(2+) is required as a cofactor. The cofactor is Zn(2+).

It is found in the cytoplasm. It carries out the reaction 7-phospho-2-dehydro-3-deoxy-D-arabino-heptonate = 3-dehydroquinate + phosphate. It participates in metabolic intermediate biosynthesis; chorismate biosynthesis; chorismate from D-erythrose 4-phosphate and phosphoenolpyruvate: step 2/7. Catalyzes the conversion of 3-deoxy-D-arabino-heptulosonate 7-phosphate (DAHP) to dehydroquinate (DHQ). The polypeptide is 3-dehydroquinate synthase (Bradyrhizobium diazoefficiens (strain JCM 10833 / BCRC 13528 / IAM 13628 / NBRC 14792 / USDA 110)).